Consider the following 297-residue polypeptide: N-acetylmuramoyl-L-alanine amidase XlyA (297 aa).

The first 44 residues, 1 to 44, serve as a signal peptide directing secretion; the sequence is MVNIIQDFIPVGANNRPGYAMTPLYITVHNTANTAVGADAAAHA. Positions 45–140 constitute an N-acetylmuramoyl-L-alanine amidase domain; that stretch reads RYLKNPDTTT…KYWSGKECPR (96 aa). Residues 159-203 form the LysM domain; it reads QTYVVKQGDTLTSIARAFGVTVAQLQEWNNIEDPNLIRVGQVLIV.

The protein belongs to the N-acetylmuramoyl-L-alanine amidase 2 family.

It localises to the secreted. The enzyme catalyses Hydrolyzes the link between N-acetylmuramoyl residues and L-amino acid residues in certain cell-wall glycopeptides.. Autolysins are involved in some important biological processes such as cell separation, cell-wall turnover, competence for genetic transformation, formation of the flagella and sporulation. The sequence is that of N-acetylmuramoyl-L-alanine amidase XlyA (xlyA) from Bacillus subtilis (strain 168).